The following is a 322-amino-acid chain: Phosphatidylserine decarboxylase proenzyme (322 aa).

Catalysis depends on charge relay system; for autoendoproteolytic cleavage activity residues Asp-90, His-147, and Ser-254. Residue Ser-254 is the Schiff-base intermediate with substrate; via pyruvic acid; for decarboxylase activity of the active site. Ser-254 bears the Pyruvic acid (Ser); by autocatalysis mark. Residues 294–322 (EVEPAPLPADEIKAEHDASPLVDNKKDDT) are disordered. The span at 303–322 (DEIKAEHDASPLVDNKKDDT) shows a compositional bias: basic and acidic residues.

This sequence belongs to the phosphatidylserine decarboxylase family. PSD-B subfamily. Prokaryotic type I sub-subfamily. As to quaternary structure, heterodimer of a large membrane-associated beta subunit and a small pyruvoyl-containing alpha subunit. Pyruvate serves as cofactor. Post-translationally, is synthesized initially as an inactive proenzyme. Formation of the active enzyme involves a self-maturation process in which the active site pyruvoyl group is generated from an internal serine residue via an autocatalytic post-translational modification. Two non-identical subunits are generated from the proenzyme in this reaction, and the pyruvate is formed at the N-terminus of the alpha chain, which is derived from the carboxyl end of the proenzyme. The autoendoproteolytic cleavage occurs by a canonical serine protease mechanism, in which the side chain hydroxyl group of the serine supplies its oxygen atom to form the C-terminus of the beta chain, while the remainder of the serine residue undergoes an oxidative deamination to produce ammonia and the pyruvoyl prosthetic group on the alpha chain. During this reaction, the Ser that is part of the protease active site of the proenzyme becomes the pyruvoyl prosthetic group, which constitutes an essential element of the active site of the mature decarboxylase.

The protein resides in the cell membrane. It catalyses the reaction a 1,2-diacyl-sn-glycero-3-phospho-L-serine + H(+) = a 1,2-diacyl-sn-glycero-3-phosphoethanolamine + CO2. It functions in the pathway phospholipid metabolism; phosphatidylethanolamine biosynthesis; phosphatidylethanolamine from CDP-diacylglycerol: step 2/2. In terms of biological role, catalyzes the formation of phosphatidylethanolamine (PtdEtn) from phosphatidylserine (PtdSer). The polypeptide is Phosphatidylserine decarboxylase proenzyme (Salmonella paratyphi C (strain RKS4594)).